The chain runs to 103 residues: 11.2 kDa protein (103 aa).

This is 11.2 kDa protein from Pseudomonas phage Pf1 (Bacteriophage Pf1).